The primary structure comprises 160 residues: Transcription elongation factor GreA (160 aa).

Positions Glu12 to Ser76 form a coiled coil.

Belongs to the GreA/GreB family.

Its function is as follows. Necessary for efficient RNA polymerase transcription elongation past template-encoded arresting sites. The arresting sites in DNA have the property of trapping a certain fraction of elongating RNA polymerases that pass through, resulting in locked ternary complexes. Cleavage of the nascent transcript by cleavage factors such as GreA or GreB allows the resumption of elongation from the new 3'terminus. GreA releases sequences of 2 to 3 nucleotides. This is Transcription elongation factor GreA from Clostridium botulinum (strain Hall / ATCC 3502 / NCTC 13319 / Type A).